The primary structure comprises 505 residues: Apolipoprotein N-acyltransferase (505 aa).

A run of 6 helical transmembrane segments spans residues 23–43 (LLAL…AVLY), 58–78 (GWWF…VSMN), 85–105 (PLLA…FFAL), 125–145 (LCFA…LTGF), 162–182 (LAPL…AALL), and 192–212 (PSFL…GLAL). The CN hydrolase domain occupies 230–469 (IQGNVEQDLK…QAVLYGEVVP (240 aa)). Glutamate 269 functions as the Proton acceptor in the catalytic mechanism. Lysine 329 is a catalytic residue. Cysteine 381 acts as the Nucleophile in catalysis. A helical membrane pass occupies residues 482 to 502 (WPLAIVCALLLGWALLAGRIA).

This sequence belongs to the CN hydrolase family. Apolipoprotein N-acyltransferase subfamily.

It localises to the cell inner membrane. The enzyme catalyses N-terminal S-1,2-diacyl-sn-glyceryl-L-cysteinyl-[lipoprotein] + a glycerophospholipid = N-acyl-S-1,2-diacyl-sn-glyceryl-L-cysteinyl-[lipoprotein] + a 2-acyl-sn-glycero-3-phospholipid + H(+). The protein operates within protein modification; lipoprotein biosynthesis (N-acyl transfer). In terms of biological role, catalyzes the phospholipid dependent N-acylation of the N-terminal cysteine of apolipoprotein, the last step in lipoprotein maturation. In Pseudomonas putida (strain ATCC 47054 / DSM 6125 / CFBP 8728 / NCIMB 11950 / KT2440), this protein is Apolipoprotein N-acyltransferase.